Reading from the N-terminus, the 663-residue chain is Beta-galactosidase BgaH (663 aa).

Residue Arg103 participates in substrate binding. Cys107 provides a ligand contact to Zn(2+). Asn141 is a binding site for substrate. Glu142 (proton donor) is an active-site residue. Cys151, Cys153, and Cys156 together coordinate Zn(2+). The active-site Nucleophile is the Glu311. Residues Trp319 and 359–362 contribute to the substrate site; that span reads EQYH.

The protein belongs to the glycosyl hydrolase 42 family. In terms of assembly, homodimer.

The catalysed reaction is Hydrolysis of terminal non-reducing beta-D-galactose residues in beta-D-galactosides.. Its activity is regulated as follows. Requires 4 M NaCl for maximal activity. Loss of activity if DTT or beta-mercaptoethanol is omitted from buffers. Addition of 5-20 mM EDTA, 1 mM Cu(2+) or 1 mM Zn(2+) results in loss of activity. In terms of biological role, when overexpressed, cleaves several different substrates including o-nitrophenyl-beta-D-galactopyranoside (ONPG), chromogen 5-bromo-4-chloro-3-indolyl-beta-D-galactopyranoside (X-Gal) and lactulose, but not lactose. Also has beta-D-fucosidase activity. No beta-L-fucosidase, beta-glucosidase, beta-arabinosidase or beta-xylosidase activity. The protein is Beta-galactosidase BgaH of Haloferax lucentense (strain DSM 14919 / JCM 9276 / NCIMB 13854 / Aa 2.2) (Haloferax alicantei).